A 458-amino-acid chain; its full sequence is Argininosuccinate lyase (458 aa).

The protein belongs to the lyase 1 family. Argininosuccinate lyase subfamily.

It is found in the cytoplasm. It carries out the reaction 2-(N(omega)-L-arginino)succinate = fumarate + L-arginine. It participates in amino-acid biosynthesis; L-arginine biosynthesis; L-arginine from L-ornithine and carbamoyl phosphate: step 3/3. The sequence is that of Argininosuccinate lyase from Salmonella newport (strain SL254).